A 420-amino-acid chain; its full sequence is Bone morphogenetic protein 2 (420 aa).

A signal peptide spans 1-23; the sequence is MVAVVRSLMVLLLAQVLLEGATG. Positions 24–303 are excised as a propeptide; sequence LIPEVGRRRY…DSVLHTREKR (280 aa). Residues asparagine 138, asparagine 167, asparagine 168, asparagine 172, and asparagine 362 are each glycosylated (N-linked (GlcNAc...) asparagine). 3 cysteine pairs are disulfide-bonded: cysteine 320/cysteine 385, cysteine 349/cysteine 417, and cysteine 353/cysteine 419.

It belongs to the TGF-beta family. As to quaternary structure, homodimer; disulfide-linked.

Its subcellular location is the secreted. Induces cartilage and bone formation. This Tetraodon nigroviridis (Spotted green pufferfish) protein is Bone morphogenetic protein 2 (bmp2).